The primary structure comprises 225 residues: Octanoyltransferase (225 aa).

Residues 44-219 enclose the BPL/LPL catalytic domain; the sequence is RETPDEIWLL…NFIAQLTHRI (176 aa). Substrate is bound by residues 83–90, 150–152, and 163–165; these read RGGQITYH, SLG, and GIA. Catalysis depends on cysteine 181, which acts as the Acyl-thioester intermediate.

It belongs to the LipB family.

The protein localises to the cytoplasm. The enzyme catalyses octanoyl-[ACP] + L-lysyl-[protein] = N(6)-octanoyl-L-lysyl-[protein] + holo-[ACP] + H(+). Its pathway is protein modification; protein lipoylation via endogenous pathway; protein N(6)-(lipoyl)lysine from octanoyl-[acyl-carrier-protein]: step 1/2. Catalyzes the transfer of endogenously produced octanoic acid from octanoyl-acyl-carrier-protein onto the lipoyl domains of lipoate-dependent enzymes. Lipoyl-ACP can also act as a substrate although octanoyl-ACP is likely to be the physiological substrate. This Nitrosomonas eutropha (strain DSM 101675 / C91 / Nm57) protein is Octanoyltransferase.